The chain runs to 358 residues: tRNA-specific 2-thiouridylase MnmA (358 aa).

Residues 10-17 (AMSGGVDS) and Met36 contribute to the ATP site. Cys105 functions as the Nucleophile in the catalytic mechanism. The cysteines at positions 105 and 202 are disulfide-linked. Residue Gly129 coordinates ATP. Residues 152-154 (KDQ) form an interaction with tRNA region. Cys202 acts as the Cysteine persulfide intermediate in catalysis. The interaction with tRNA stretch occupies residues 308 to 309 (RY).

The protein belongs to the MnmA/TRMU family.

It localises to the cytoplasm. The enzyme catalyses S-sulfanyl-L-cysteinyl-[protein] + uridine(34) in tRNA + AH2 + ATP = 2-thiouridine(34) in tRNA + L-cysteinyl-[protein] + A + AMP + diphosphate + H(+). Its function is as follows. Catalyzes the 2-thiolation of uridine at the wobble position (U34) of tRNA, leading to the formation of s(2)U34. This Magnetococcus marinus (strain ATCC BAA-1437 / JCM 17883 / MC-1) protein is tRNA-specific 2-thiouridylase MnmA.